The chain runs to 339 residues: Longiborneol synthase CLM1 (339 aa).

Polar residues predominate over residues 1 to 17 (MLATPTLSNFDKPSLPS). The interval 1–21 (MLATPTLSNFDKPSLPSSEGG) is disordered. 4 residues coordinate Mg(2+): aspartate 112, asparagine 241, serine 245, and glutamate 249. Residues 241 to 249 (NDVLSFYKE) carry the NDXXSXXXE magnesium-binding motif motif.

It belongs to the trichodiene synthase family. Mg(2+) serves as cofactor. Mn(2+) is required as a cofactor.

The enzyme catalyses (2E,6E)-farnesyl diphosphate + H2O = (-)-longiborneol + diphosphate. The protein operates within mycotoxin biosynthesis. In terms of biological role, terpene cyclase involved in the biosynthesis of culmorin, a tricyclic sesquiterpene diol reported to have antifungal activity and some phytotoxicity to wheat coleoptile tissue, contributing to Fusarium head blight disease. The terpene cyclase CLM1 is responsible for the cyclization of farnesyl diphosphate into the intermediate longiborneol. Longiborneol is then hydroxylated in a regio- and endo-stereoselective manner at position C-11 by the cytochrome P450 monooxygenase CLM2 to produce culmorin. Additional non-specific oxygenases are also able to hydroxylate longiborneol at other sites than C-11 leading to 3-hydroxylongiborneol, 5-hydroxylongiborneol, 12-hydroxylongiborneol and 15-hydroxylongiborneol. Moreover, another oxygenase capable of installing a C-11 exo-hydroxy group in longiborneol can also yield 11-epi-acetylculmorin. The production of these longiborneol derivatives is dwarfed by the high abundance of culmorin, suggesting that CLM2 displays superior enzymatic activity to the unidentified, possibly promiscuous, additional oxygenases. This is Longiborneol synthase CLM1 from Gibberella zeae (strain ATCC MYA-4620 / CBS 123657 / FGSC 9075 / NRRL 31084 / PH-1) (Wheat head blight fungus).